The chain runs to 545 residues: tRNA-2-methylthio-N(6)-dimethylallyladenosine synthase (545 aa).

Residues 1 to 32 (MSSASPLARCCDEATPSAGPRAAQPPYHGPVT) are disordered. The MTTase N-terminal domain occupies 58–174 (RTYQVRTYGC…LPTLLERARH (117 aa)). 6 residues coordinate [4Fe-4S] cluster: cysteine 67, cysteine 103, cysteine 137, cysteine 211, cysteine 215, and cysteine 218. Positions 197-433 (RESAYAAWVS…IALQEQISLE (237 aa)) constitute a Radical SAM core domain. The TRAM domain occupies 436 to 504 (RALVGQAVEV…PHHLIADAGV (69 aa)).

It belongs to the methylthiotransferase family. MiaB subfamily. In terms of assembly, monomer. Requires [4Fe-4S] cluster as cofactor.

The protein localises to the cytoplasm. It carries out the reaction N(6)-dimethylallyladenosine(37) in tRNA + (sulfur carrier)-SH + AH2 + 2 S-adenosyl-L-methionine = 2-methylsulfanyl-N(6)-dimethylallyladenosine(37) in tRNA + (sulfur carrier)-H + 5'-deoxyadenosine + L-methionine + A + S-adenosyl-L-homocysteine + 2 H(+). In terms of biological role, catalyzes the methylthiolation of N6-(dimethylallyl)adenosine (i(6)A), leading to the formation of 2-methylthio-N6-(dimethylallyl)adenosine (ms(2)i(6)A) at position 37 in tRNAs that read codons beginning with uridine. The protein is tRNA-2-methylthio-N(6)-dimethylallyladenosine synthase of Mycobacterium bovis (strain BCG / Pasteur 1173P2).